The chain runs to 176 residues: Ribosome maturation factor RimM (176 aa).

A PRC barrel domain is found at 97-176; the sequence is EDEFYWRDLI…QILVDWDPDF (80 aa).

It belongs to the RimM family. Binds ribosomal protein uS19.

The protein localises to the cytoplasm. Functionally, an accessory protein needed during the final step in the assembly of 30S ribosomal subunit, possibly for assembly of the head region. Essential for efficient processing of 16S rRNA. May be needed both before and after RbfA during the maturation of 16S rRNA. It has affinity for free ribosomal 30S subunits but not for 70S ribosomes. The polypeptide is Ribosome maturation factor RimM (Shewanella sp. (strain MR-4)).